A 608-amino-acid polypeptide reads, in one-letter code: Phosphoenolpyruvate carboxykinase [GTP] (608 aa).

Residues Arg82 and 222–224 (YGG) contribute to the substrate site. 2 residues coordinate Mn(2+): Lys231 and His251. Ser273 serves as a coordination point for substrate. 274–279 (ACGKTN) is a GTP binding site. Cys275 is an active-site residue. Residue Asp298 coordinates Mn(2+). 389-391 (NSR) is a binding site for substrate. Residues Arg391, Arg422, and 517–520 (FGDN) contribute to the GTP site.

This sequence belongs to the phosphoenolpyruvate carboxykinase [GTP] family. Monomer. The cofactor is Mn(2+).

It localises to the cytoplasm. It catalyses the reaction oxaloacetate + GTP = phosphoenolpyruvate + GDP + CO2. Its pathway is carbohydrate biosynthesis; gluconeogenesis. Its function is as follows. Catalyzes the conversion of oxaloacetate (OAA) to phosphoenolpyruvate (PEP), the rate-limiting step in the metabolic pathway that produces glucose from lactate and other precursors derived from the citric acid cycle. In Paenarthrobacter aurescens (strain TC1), this protein is Phosphoenolpyruvate carboxykinase [GTP].